A 403-amino-acid chain; its full sequence is Malate dehydrogenase, chloroplastic (403 aa).

Residues M1–N80 constitute a chloroplast transit peptide. Residues G89–G95 and D115 each bind NAD(+). Substrate contacts are provided by R162 and R168. NAD(+) contacts are provided by residues N175 and I198–N200. Positions 200 and 234 each coordinate substrate. The active-site Proton acceptor is H258. M309 contacts NAD(+).

It belongs to the LDH/MDH superfamily. MDH type 1 family. As to quaternary structure, homodimer. In terms of tissue distribution, expressed in rosette leaves. Expressed in meristematic regions of roots and shoots, cotyledons, young leaves, trichomes, stamen, pollen, tapetum, gynoecium and ovules.

It localises to the plastid. Its subcellular location is the chloroplast stroma. The catalysed reaction is (S)-malate + NAD(+) = oxaloacetate + NADH + H(+). Its function is as follows. Catalyzes a reversible NAD-dependent dehydrogenase reaction involved in central metabolism and redox homeostasis between organelle compartments. Plays a key role in the metabolism of dark chloroplasts and non-green plastids. Essential for embryo viability. Plays an essential role in heterotrophic metabolism in embryos, and autotrophic metabolism in photosynthetic tissues as well. In Arabidopsis thaliana (Mouse-ear cress), this protein is Malate dehydrogenase, chloroplastic.